The following is a 238-amino-acid chain: MTEQNPAAEEQQSAPRRTIKSFVMRAGRMTEGQQRGLEQGWPKYGLELADGLRDFDEVFGRSAPRTFEIGFGMGHSTLEMAAAAPEQDFIGVEVHKPGVGALLSGLVSQKLTNVRVYSCDALEVLRDCVADASLDRVLLFFPDPWHKSRHHKRRIVQPAFAELVRRKLKVGGVLHMATDWEPYAEHMLEVMNVAPGYRNLAQDGRCVPRPTERPVTKFERRGERLGHGVWDLKFQRID.

S-adenosyl-L-methionine is bound by residues glutamate 68, glutamate 93, aspartate 120, and aspartate 143. Residue aspartate 143 is part of the active site. Substrate-binding positions include lysine 147, aspartate 179, and 216-219 (TKFE).

The protein belongs to the class I-like SAM-binding methyltransferase superfamily. TrmB family.

The catalysed reaction is guanosine(46) in tRNA + S-adenosyl-L-methionine = N(7)-methylguanosine(46) in tRNA + S-adenosyl-L-homocysteine. It functions in the pathway tRNA modification; N(7)-methylguanine-tRNA biosynthesis. Catalyzes the formation of N(7)-methylguanine at position 46 (m7G46) in tRNA. The sequence is that of tRNA (guanine-N(7)-)-methyltransferase from Stutzerimonas stutzeri (strain A1501) (Pseudomonas stutzeri).